A 358-amino-acid chain; its full sequence is Peptide chain release factor 1 (358 aa).

Gln235 is subject to N5-methylglutamine.

This sequence belongs to the prokaryotic/mitochondrial release factor family. Post-translationally, methylated by PrmC. Methylation increases the termination efficiency of RF1.

It is found in the cytoplasm. Peptide chain release factor 1 directs the termination of translation in response to the peptide chain termination codons UAG and UAA. This chain is Peptide chain release factor 1, found in Brachyspira hyodysenteriae (strain ATCC 49526 / WA1).